We begin with the raw amino-acid sequence, 360 residues long: Photosystem II protein D1 (360 aa).

Transmembrane regions (helical) follow at residues 29-46 (YIGW…TATT), 118-133 (HFLL…EWEL), and 142-156 (WIFV…AASA). H118 is a chlorophyll a binding site. Residue Y126 participates in pheophytin a binding. Residues D170 and E189 each coordinate [CaMn4O5] cluster. Residues 197 to 218 (FHMAGVAGVFGGSLFSAMHGSL) form a helical membrane-spanning segment. H198 contacts chlorophyll a. Residues H215 and 264–265 (SF) contribute to the a quinone site. H215 contacts Fe cation. H272 serves as a coordination point for Fe cation. The helical transmembrane segment at 274 to 288 (FLAAWPVVRIWLTAL) threads the bilayer. H332, E333, D342, and A344 together coordinate [CaMn4O5] cluster. Residues 345-360 (AGEVLPVAVSAPAVHA) constitute a propeptide that is removed on maturation.

The protein belongs to the reaction center PufL/M/PsbA/D family. As to quaternary structure, PSII is composed of 1 copy each of membrane proteins PsbA, PsbB, PsbC, PsbD, PsbE, PsbF, PsbH, PsbI, PsbJ, PsbK, PsbL, PsbM, PsbT, PsbX, PsbY, PsbZ, Psb30/Ycf12, at least 3 peripheral proteins of the oxygen-evolving complex and a large number of cofactors. It forms dimeric complexes. It depends on The D1/D2 heterodimer binds P680, chlorophylls that are the primary electron donor of PSII, and subsequent electron acceptors. It shares a non-heme iron and each subunit binds pheophytin, quinone, additional chlorophylls, carotenoids and lipids. D1 provides most of the ligands for the Mn4-Ca-O5 cluster of the oxygen-evolving complex (OEC). There is also a Cl(-1) ion associated with D1 and D2, which is required for oxygen evolution. The PSII complex binds additional chlorophylls, carotenoids and specific lipids. as a cofactor. In terms of processing, tyr-161 forms a radical intermediate that is referred to as redox-active TyrZ, YZ or Y-Z. Post-translationally, C-terminally processed by CTPA; processing is essential to allow assembly of the oxygen-evolving complex and thus photosynthetic growth.

It is found in the plastid. Its subcellular location is the chloroplast thylakoid membrane. It carries out the reaction 2 a plastoquinone + 4 hnu + 2 H2O = 2 a plastoquinol + O2. Its function is as follows. Photosystem II (PSII) is a light-driven water:plastoquinone oxidoreductase that uses light energy to abstract electrons from H(2)O, generating O(2) and a proton gradient subsequently used for ATP formation. It consists of a core antenna complex that captures photons, and an electron transfer chain that converts photonic excitation into a charge separation. The D1/D2 (PsbA/PsbD) reaction center heterodimer binds P680, the primary electron donor of PSII as well as several subsequent electron acceptors. This chain is Photosystem II protein D1, found in Bumilleriopsis filiformis (Yellow-green alga).